The chain runs to 275 residues: Large ribosomal subunit protein uL2 (275 aa).

Positions 28-38 are enriched in basic and acidic residues; that stretch reads EPYAPLLDKKS. Disordered regions lie at residues 28-55 and 224-258; these read EPYA…RHVG and AMNP…GYKT.

The protein belongs to the universal ribosomal protein uL2 family. Part of the 50S ribosomal subunit. Forms a bridge to the 30S subunit in the 70S ribosome.

In terms of biological role, one of the primary rRNA binding proteins. Required for association of the 30S and 50S subunits to form the 70S ribosome, for tRNA binding and peptide bond formation. It has been suggested to have peptidyltransferase activity; this is somewhat controversial. Makes several contacts with the 16S rRNA in the 70S ribosome. The polypeptide is Large ribosomal subunit protein uL2 (Cellvibrio japonicus (strain Ueda107) (Pseudomonas fluorescens subsp. cellulosa)).